The following is a 112-amino-acid chain: Large ribosomal subunit protein eL30 (112 aa).

It belongs to the eukaryotic ribosomal protein eL30 family.

In Euphorbia esula (Leafy spurge), this protein is Large ribosomal subunit protein eL30 (RPL30).